A 579-amino-acid chain; its full sequence is Glucans biosynthesis protein G (579 aa).

The signal sequence occupies residues 1–37; it reads MIVSPHKASRIPGNRLRKALMASAALVGLMSAGQLWA. Positions 516 to 579 are disordered; it reads AKPAEEAKHD…TWSYQLPADE (64 aa). The span at 517–539 shows a compositional bias: basic and acidic residues; that stretch reads KPAEEAKHDKTAAKHGKAEKAAK.

It belongs to the OpgD/OpgG family.

Its subcellular location is the periplasm. The protein operates within glycan metabolism; osmoregulated periplasmic glucan (OPG) biosynthesis. In terms of biological role, involved in the biosynthesis of osmoregulated periplasmic glucans (OPGs). This is Glucans biosynthesis protein G from Pseudomonas putida (strain W619).